A 63-amino-acid chain; its full sequence is MHCLSVFVILLLLTASAPSVDAQPKTEDDVPLSSFHDDLQRTVRTLLDIRMCCLGTSGCCPWG.

The signal sequence occupies residues 1–22; it reads MHCLSVFVILLLLTASAPSVDA. A propeptide spanning residues 23–50 is cleaved from the precursor; it reads QPKTEDDVPLSSFHDDLQRTVRTLLDIR. Trp62 is modified (tryptophan amide).

It belongs to the conotoxin T superfamily. Contains 2 disulfide bonds that can be either 'C1-C3, C2-C4' or 'C1-C4, C2-C3', since these disulfide connectivities have been observed for conotoxins with cysteine framework V (for examples, see AC P0DQQ7 and AC P81755). As to expression, expressed by the venom duct.

Its subcellular location is the secreted. The chain is Conotoxin PnMRCL-0111 from Conus pennaceus (Feathered cone).